Reading from the N-terminus, the 105-residue chain is DNA-directed RNA polymerase subunit omega (105 aa).

It belongs to the RNA polymerase subunit omega family. As to quaternary structure, the RNAP catalytic core consists of 2 alpha, 1 beta, 1 beta' and 1 omega subunit. When a sigma factor is associated with the core the holoenzyme is formed, which can initiate transcription.

The catalysed reaction is RNA(n) + a ribonucleoside 5'-triphosphate = RNA(n+1) + diphosphate. Promotes RNA polymerase assembly. Latches the N- and C-terminal regions of the beta' subunit thereby facilitating its interaction with the beta and alpha subunits. This chain is DNA-directed RNA polymerase subunit omega, found in Streptococcus equi subsp. equi (strain 4047).